The primary structure comprises 693 residues: Protein-glutamine gamma-glutamyltransferase E (693 aa).

Tyr111 is subject to Phosphotyrosine. Thr112 is subject to Phosphothreonine. Ca(2+)-binding residues include Ala222, Asn225, Asn227, and Asp228. Cys273 is an active-site residue. Ca(2+)-binding residues include Asp302, Asp304, Asn306, Ser308, and Asp325. Catalysis depends on residues His331 and Asp354. The Ca(2+) site is built by Asn394, Thr416, Glu444, and Glu449. The disordered stretch occupies residues 455-482 (KAMNKLKPNASFGATSSRGPQGEEKEPS).

Belongs to the transglutaminase superfamily. Transglutaminase family. Consists of two polypeptide chains, which are synthesized as a precursor form of a single polypeptide. The cofactor is Ca(2+). Post-translationally, activated by proteolytic processing. In vitro activation is commonly achieved by cleavage with dispase, a neutral bacterial protease. Physiological activation may be catalyzed by CTSL and, to a lesser extent, by CTSS.

The protein resides in the cytoplasm. It catalyses the reaction L-glutaminyl-[protein] + L-lysyl-[protein] = [protein]-L-lysyl-N(6)-5-L-glutamyl-[protein] + NH4(+). Its function is as follows. Catalyzes the calcium-dependent formation of isopeptide cross-links between glutamine and lysine residues in various proteins, as well as the conjugation of polyamines to proteins. Involved in the formation of the cornified envelope (CE), a specialized component consisting of covalent cross-links of proteins beneath the plasma membrane of terminally differentiated keratinocytes. Catalyzes small proline-rich proteins and LOR cross-linking to form small interchain oligomers, which are further cross-linked by TGM1 onto the growing CE scaffold. In hair follicles, involved in cross-linking structural proteins to hardening the inner root sheath. This is Protein-glutamine gamma-glutamyltransferase E (Tgm3) from Rattus norvegicus (Rat).